The primary structure comprises 189 residues: MKVSTIESGEISKGASSPRKGMKRGLSIMDFILRIFAAMSTLGSALSMGTAKQTMPFATRFVRFKVSFHDLPTFLFFVTANSIVCGYLALSLVLSFFHIVRTISVKSRILLVFLDTVMFGLLTSGASAAAAIVYVAHYGNPSANWFPFCQQYNSFCGRISGSLVGSFIAVVIFMILILMSGISISKSKH.

The interval Met1–Gly21 is disordered. Residues Met1 to Gly25 lie on the Cytoplasmic side of the membrane. A helical membrane pass occupies residues Leu26–Leu46. Over Ser47–Thr73 the chain is Extracellular. A helical membrane pass occupies residues Phe74–Leu94. Topologically, residues Ser95–Arg108 are cytoplasmic. A helical membrane pass occupies residues Ile109–Ala129. Residues Ala130–Leu163 are Extracellular-facing. The chain crosses the membrane as a helical span at residues Val164–Ile184. Residues Ser185 to His189 are Cytoplasmic-facing.

Belongs to the Casparian strip membrane proteins (CASP) family. In terms of assembly, homodimer and heterodimers.

It is found in the cell membrane. Regulates membrane-cell wall junctions and localized cell wall deposition. Required for establishment of the Casparian strip membrane domain (CSD) and the subsequent formation of Casparian strips, a cell wall modification of the root endodermis that determines an apoplastic barrier between the intraorganismal apoplasm and the extraorganismal apoplasm and prevents lateral diffusion. The chain is Casparian strip membrane protein 2 from Medicago truncatula (Barrel medic).